The sequence spans 187 residues: MAPSLLLLSLPWPVRPGPLQRCWELLQRQLQQSWSRFVSPPWAPALAVQRPSILTELAHDTCENKENSSFLDSIFWMAAPKNRRTIEVNRCRRRNPQKLIKIKNNIDICPECGHLKQKHVLCGYCYEKVRQETTKIRQQIGAQEGGPFRAPSVETMVLYTGEKPSEKDQGKRIVERNIKRPSWFTQN.

Cysteine 109, cysteine 112, cysteine 122, and cysteine 125 together coordinate Zn(2+).

It belongs to the bacterial ribosomal protein bL32 family. As to quaternary structure, component of the mitochondrial ribosome large subunit (39S) which comprises a 16S rRNA and about 50 distinct proteins. In terms of processing, MRPL32 precursor is processed by the m-AAA protease (composed of AFG3L2 and SPG7), which cleaves the N-terminal transit peptide. Cleavage by the m-AAA protease takes place prior to assembly into the large subunit, an essential step for mitochondrial ribosome (mitoribosome) assembly. Proper processing by the m-AAA protease is dependent on the zinc-binding region within the tightly folded C-terminal domain of MRPL32: zinc-dependent folding halts degradation initiated from the N-terminus and triggers the release of mature MRPL32.

The protein resides in the mitochondrion. Component of the mitochondrial large ribosomal subunit (mt-LSU). The mitochondrial ribosome (mitoribosome) is a large ribonucleoprotein complex responsible for the synthesis of proteins inside mitochondria. The chain is Large ribosomal subunit protein bL32m (Mrpl32) from Mus musculus (Mouse).